Here is a 619-residue protein sequence, read N- to C-terminus: Thiohydroximate-O-sulfate sulfur/sulfate-lyase (nitrile-forming) NSP4 (619 aa).

Jacalin-type lectin domains are found at residues 2-142 (AQKV…YFAP) and 151-292 (AKKL…YISL). Kelch repeat units follow at residues 326–374 (KIYS…VCMV), 379–425 (TLYV…SMAA), 429–478 (NVYV…VVQG), 480–524 (VWVV…ASAA), and 528–583 (HIVI…GWTA). Arg-386 functions as the Proton donor in the catalytic mechanism. A (Z)-N-(sulfonatooxy)alkanimidothioate-binding residues include Arg-386, Ser-419, Arg-441, Gly-470, and Val-519. The Proton donor role is filled by Arg-441. Fe(2+)-binding residues include Glu-535, Asp-539, and His-543. Trp-581 provides a ligand contact to a (Z)-N-(sulfonatooxy)alkanimidothioate.

This sequence belongs to the jacalin lectin family. Fe(2+) serves as cofactor. As to expression, mainly expressed in roots, and, to a lower extent, in seedlings and leaves. Observed in seeds.

It catalyses the reaction a (Z)-N-(sulfonatooxy)alkanimidothioate = a nitrile + sulfur + sulfate. It carries out the reaction (Z)-phenyl-N-(sulfonatooxy)methanimidothioate = phenylacetonitrile + sulfur + sulfate. The catalysed reaction is (Z)-N-(sulfonatooxy)prop-2-enimidothioate = but-3-enenitrile + sulfur + sulfate. In terms of biological role, specifier protein that contributes to constitutive and herbivore-induced simple nitrile formation. Promotes simple nitriles, but not epithionitrile or thiocyanate formation. Converts allylglucosinolate and benzylglucosinolate (glucotropaeolin) to their corresponding simple nitriles in the presence of myrosinase. The sequence is that of Thiohydroximate-O-sulfate sulfur/sulfate-lyase (nitrile-forming) NSP4 from Arabidopsis thaliana (Mouse-ear cress).